We begin with the raw amino-acid sequence, 639 residues long: Chaperone protein HtpG (639 aa).

Residues methionine 1–arginine 347 are a; substrate-binding. The interval glutamate 348–lysine 564 is b. Residues leucine 565–lysine 639 are c.

Belongs to the heat shock protein 90 family. In terms of assembly, homodimer.

It is found in the cytoplasm. Functionally, molecular chaperone. Has ATPase activity. In Shewanella loihica (strain ATCC BAA-1088 / PV-4), this protein is Chaperone protein HtpG.